A 980-amino-acid chain; its full sequence is Valine--tRNA ligase (980 aa).

A 'HIGH' region motif is present at residues 43 to 53; the sequence is PNVTGTLHMGH. Residues 586–590 carry the 'KMSKS' region motif; sequence KMSKS. Lys589 contributes to the ATP binding site. A coiled-coil region spans residues 914–978; that stretch reads LVDMDAERTR…QLTGLREQRA (65 aa).

Belongs to the class-I aminoacyl-tRNA synthetase family. ValS type 1 subfamily. Monomer.

It localises to the cytoplasm. The enzyme catalyses tRNA(Val) + L-valine + ATP = L-valyl-tRNA(Val) + AMP + diphosphate. Catalyzes the attachment of valine to tRNA(Val). As ValRS can inadvertently accommodate and process structurally similar amino acids such as threonine, to avoid such errors, it has a 'posttransfer' editing activity that hydrolyzes mischarged Thr-tRNA(Val) in a tRNA-dependent manner. In Xanthomonas euvesicatoria pv. vesicatoria (strain 85-10) (Xanthomonas campestris pv. vesicatoria), this protein is Valine--tRNA ligase.